Here is a 159-residue protein sequence, read N- to C-terminus: MPLKRPELDDPEIRELLEQGMGHNTYGEPFWPNDILIFGVVILGTIFGVIALAVLDPAKMGEPADPFNTPLHILPEWYFYPVFQILRVVPNKLLGVVLMAAIPIGLALVPFIENVNKFQNPFRRPLATAVFLIGTVVTMYLGIGAMIPDIPKSLTLGLF.

The next 3 membrane-spanning stretches (helical) occupy residues 35-55 (ILIF…LAVL), 93-113 (LLGV…PFIE), and 127-147 (ATAV…GAMI).

Belongs to the cytochrome b family. PetD subfamily. The 4 large subunits of the cytochrome b6-f complex are cytochrome b6, subunit IV (17 kDa polypeptide, PetD), cytochrome f and the Rieske protein, while the 4 small subunits are PetG, PetL, PetM and PetN. The complex functions as a dimer.

Its subcellular location is the cell inner membrane. Its function is as follows. Component of the cytochrome b6-f complex, which mediates electron transfer between photosystem II (PSII) and photosystem I (PSI), cyclic electron flow around PSI, and state transitions. In Gloeobacter violaceus (strain ATCC 29082 / PCC 7421), this protein is Cytochrome b6-f complex subunit 4.